Here is a 348-residue protein sequence, read N- to C-terminus: Dihydroorotase (348 aa).

Zn(2+) contacts are provided by H17 and H19. Substrate is bound by residues 19–21 and N45; that span reads HLR. Zn(2+) contacts are provided by K103, H140, and H178. K103 carries the N6-carboxylysine modification. H140 contacts substrate. L223 is a substrate binding site. Zn(2+) is bound at residue D251. D251 is a catalytic residue. 2 residues coordinate substrate: H255 and A267.

It belongs to the metallo-dependent hydrolases superfamily. DHOase family. Class II DHOase subfamily. As to quaternary structure, homodimer. It depends on Zn(2+) as a cofactor.

It carries out the reaction (S)-dihydroorotate + H2O = N-carbamoyl-L-aspartate + H(+). The protein operates within pyrimidine metabolism; UMP biosynthesis via de novo pathway; (S)-dihydroorotate from bicarbonate: step 3/3. Functionally, catalyzes the reversible cyclization of carbamoyl aspartate to dihydroorotate. The chain is Dihydroorotase from Shigella dysenteriae serotype 1 (strain Sd197).